Here is a 191-residue protein sequence, read N- to C-terminus: Ferric nitrobindin-like protein (191 aa).

Positions 20 to 26 (GNWAGAG) match the GXWXGXG motif.

This sequence belongs to the nitrobindin family.

This chain is Ferric nitrobindin-like protein, found in Streptomyces avermitilis (strain ATCC 31267 / DSM 46492 / JCM 5070 / NBRC 14893 / NCIMB 12804 / NRRL 8165 / MA-4680).